A 351-amino-acid chain; its full sequence is E3 ubiquitin-protein ligase TRIM63 (351 aa).

The RING-type zinc-finger motif lies at 23–79; the sequence is CPICLEMFTKPVVILPCQHNLCRKCANDIFQAANPYWTNRGGSVSMSGGRFRCPSCR. The tract at residues 74–218 is interaction with TTN; the sequence is RCPSCRHEVI…LSHKFDALYA (145 aa). The segment at 117 to 159 adopts a B box-type zinc-finger fold; it reads GSHPMCKEHEDEKINIYCLTCEVPTCSLCKVFGAHQACEVAPL. Cys-122, His-125, Cys-145, and His-151 together coordinate Zn(2+). Residues 189–269 are a coiled coil; that stretch reads SQLEDSCRVT…VETAIQSLDE (81 aa). Positions 267-325 constitute a COS domain; the sequence is LDEPGGATFLLSAKPLIKSIVEASKGCQLGKTEQGFENMDYFTLNLEHIAEALRAIDFG. Residues 326 to 345 show a composition bias toward acidic residues; that stretch reads TDEEEEFTEEEEEEDQEEGV. The disordered stretch occupies residues 326–351; the sequence is TDEEEEFTEEEEEEDQEEGVSTEGHQ.

As to quaternary structure, homodimer. Homooligomer and heterooligomer. Interacts with SUMO2, titin/TTN and GMEB1. Interacts with TRIM54 and probably with TRIM55 and TNNI3. Forms a ternary complex with RACK1 and PRKCE. Interacts with CKM. Muscle specific. Selectively expressed in heart and skeletal muscle.

The protein localises to the cytoplasm. It is found in the nucleus. The protein resides in the myofibril. Its subcellular location is the sarcomere. It localises to the m line. The protein localises to the z line. It carries out the reaction S-ubiquitinyl-[E2 ubiquitin-conjugating enzyme]-L-cysteine + [acceptor protein]-L-lysine = [E2 ubiquitin-conjugating enzyme]-L-cysteine + N(6)-ubiquitinyl-[acceptor protein]-L-lysine.. It functions in the pathway protein modification; protein ubiquitination. Functionally, E3 ubiquitin ligase. Mediates the ubiquitination and subsequent proteasomal degradation of CKM, GMEB1 and HIBADH. Regulates the proteasomal degradation of muscle proteins under amino acid starvation, where muscle protein is catabolized to provide other organs with amino acids. Inhibits de novo skeletal muscle protein synthesis under amino acid starvation. Regulates proteasomal degradation of cardiac troponin I/TNNI3 and probably of other sarcomeric-associated proteins. May play a role in striated muscle atrophy and hypertrophy by regulating an anti-hypertrophic PKC-mediated signaling pathway. May regulate the organization of myofibrils through TTN in muscle cells. The sequence is that of E3 ubiquitin-protein ligase TRIM63 (Trim63) from Rattus norvegicus (Rat).